Consider the following 1092-residue polypeptide: NAD-specific glutamate dehydrogenase (1092 aa).

Lysine 626 is an active-site residue.

It belongs to the Glu/Leu/Phe/Val dehydrogenases family. As to quaternary structure, homotetramer. Interacts with NNK1. In terms of processing, phosphorylated by a complex containing the NNK1 kinase.

It catalyses the reaction L-glutamate + NAD(+) + H2O = 2-oxoglutarate + NH4(+) + NADH + H(+). NAD(+)-dependent glutamate dehydrogenase which degrades glutamate to ammonia and alpha-ketoglutarate. The protein is NAD-specific glutamate dehydrogenase (GDH2) of Saccharomyces cerevisiae (strain ATCC 204508 / S288c) (Baker's yeast).